The sequence spans 222 residues: Interleukin-12 subunit alpha (222 aa).

The N-terminal stretch at 1 to 25 (MCPPRGLLLVTILVLLNHLDHLSLA) is a signal peptide. 3 disulfides stabilise this stretch: Cys40-Cys113, Cys67-Cys199, and Cys88-Cys126. Residues Asn42, Asn96, Asn110, and Asn183 are each glycosylated (N-linked (GlcNAc...) asparagine).

It belongs to the IL-6 superfamily. Heterodimer with IL12B; disulfide-linked. This heterodimer is known as interleukin IL-12. Heterodimer with EBI3/IL27B; not disulfide-linked. This heterodimer is known as interleukin IL-35. Interacts with NBR1; this interaction promotes IL-12 secretion.

It localises to the secreted. In terms of biological role, heterodimerizes with IL12B to form the IL-12 cytokine or with EBI3/IL27B to form the IL-35 cytokine. IL-12 is primarily produced by professional antigen-presenting cells (APCs) such as B-cells and dendritic cells (DCs) as well as macrophages and granulocytes and regulates T-cell and natural killer-cell responses, induces the production of interferon-gamma (IFN-gamma), favors the differentiation of T-helper 1 (Th1) cells and is an important link between innate resistance and adaptive immunity. Mechanistically, exerts its biological effects through a receptor composed of IL12R1 and IL12R2 subunits. Binding to the receptor results in the rapid tyrosine phosphorylation of a number of cellular substrates including the JAK family kinases TYK2 and JAK2. In turn, recruited STAT4 gets phosphorylated and translocates to the nucleus where it regulates cytokine/growth factor responsive genes. As part of IL-35, plays essential roles in maintaining the immune homeostasis of the liver microenvironment and also functions as an immune-suppressive cytokine. Mediates biological events through unconventional receptors composed of IL12RB2 and gp130/IL6ST heterodimers or homodimers. Signaling requires the transcription factors STAT1 and STAT4, which form a unique heterodimer that binds to distinct DNA sites. The protein is Interleukin-12 subunit alpha (IL12A) of Felis catus (Cat).